We begin with the raw amino-acid sequence, 273 residues long: 4-hydroxy-tetrahydrodipicolinate reductase (273 aa).

NAD(+)-binding positions include 11–16 (GATGKM) and 106–108 (GTT). The active-site Proton donor/acceptor is the His-162. His-163 contacts (S)-2,3,4,5-tetrahydrodipicolinate. Catalysis depends on Lys-166, which acts as the Proton donor. 172–173 (GT) contributes to the (S)-2,3,4,5-tetrahydrodipicolinate binding site.

It belongs to the DapB family.

The protein resides in the cytoplasm. The enzyme catalyses (S)-2,3,4,5-tetrahydrodipicolinate + NAD(+) + H2O = (2S,4S)-4-hydroxy-2,3,4,5-tetrahydrodipicolinate + NADH + H(+). It carries out the reaction (S)-2,3,4,5-tetrahydrodipicolinate + NADP(+) + H2O = (2S,4S)-4-hydroxy-2,3,4,5-tetrahydrodipicolinate + NADPH + H(+). Its pathway is amino-acid biosynthesis; L-lysine biosynthesis via DAP pathway; (S)-tetrahydrodipicolinate from L-aspartate: step 4/4. Catalyzes the conversion of 4-hydroxy-tetrahydrodipicolinate (HTPA) to tetrahydrodipicolinate. In Synechococcus sp. (strain ATCC 27144 / PCC 6301 / SAUG 1402/1) (Anacystis nidulans), this protein is 4-hydroxy-tetrahydrodipicolinate reductase.